We begin with the raw amino-acid sequence, 1240 residues long: Pectate lyase L (1240 aa).

The first 26 residues, methionine 1–alanine 26, serve as a signal peptide directing secretion. Has catalytic activity regions lie at residues glutamate 27–arginine 551 and threonine 545–lysine 1240. Residues aspartate 325, glutamate 349, aspartate 350, aspartate 1049, aspartate 1073, aspartate 1074, and aspartate 1077 each contribute to the Ca(2+) site. The active-site Proton acceptor is lysine 1117.

Belongs to the polysaccharide lyase 9 family. Ca(2+) serves as cofactor.

It localises to the secreted. The catalysed reaction is Eliminative cleavage of (1-&gt;4)-alpha-D-galacturonan to give oligosaccharides with 4-deoxy-alpha-D-galact-4-enuronosyl groups at their non-reducing ends.. Inhibited by the metal chelator ethylenediaminetetraacetic acid (EDTA). Functionally, cleaves polygalacturonate or partially methylated pectin. When assayed on polygalacturonate or on pectin, it releases monogalacturonate as the principal product. This is Pectate lyase L from Thermoclostridium stercorarium (Clostridium stercorarium).